The primary structure comprises 631 residues: Probable protein phosphatase 2C 31 (631 aa).

Disordered stretches follow at residues 119–142 and 205–231; these read GPLH…SDRF and LSGR…PKGN. A compositionally biased stretch (polar residues) spans 131-140; that stretch reads ASGSASTASD. Residues 221–622 enclose the PPM-type phosphatase domain; the sequence is DGDYRSTPKG…DDVSIIVMSF (402 aa). Residues Asp261 and Gly262 each contribute to the Mn(2+) site. Residues 324-347 are disordered; the sequence is GGDDDPDAERKAKRGRIERNADDD. Residues Asp550 and Asp613 each contribute to the Mn(2+) site.

The protein belongs to the PP2C family. Requires Mg(2+) as cofactor. Mn(2+) is required as a cofactor.

It carries out the reaction O-phospho-L-seryl-[protein] + H2O = L-seryl-[protein] + phosphate. The catalysed reaction is O-phospho-L-threonyl-[protein] + H2O = L-threonyl-[protein] + phosphate. The polypeptide is Probable protein phosphatase 2C 31 (Oryza sativa subsp. japonica (Rice)).